A 210-amino-acid chain; its full sequence is MCVSVGESVAQSLQQWDRKLWDVAMLHACNAVDETGRKRYPTLGVGTRFRTALRDSLDIYGVMATPGVDLEKTRFPVGVRSDLLPDKRPDIADVLYGIHRWLHGHADESSVEFEVSPYVNASAALRIANDGKIQLPKSAILGLLAVAVFAPENKGEVIPPDYQLSWYDHVFFISVWWGWQDHFREIVNVDRASLVALDFGDLWNGWTPVG.

This is an uncharacterized protein from Mycobacterium bovis (strain ATCC BAA-935 / AF2122/97).